We begin with the raw amino-acid sequence, 129 residues long: Glycine cleavage system H protein (129 aa).

One can recognise a Lipoyl-binding domain in the interval leucine 24–lysine 106. Position 65 is an N6-lipoyllysine (lysine 65).

It belongs to the GcvH family. As to quaternary structure, the glycine cleavage system is composed of four proteins: P, T, L and H. Requires (R)-lipoate as cofactor.

Functionally, the glycine cleavage system catalyzes the degradation of glycine. The H protein shuttles the methylamine group of glycine from the P protein to the T protein. The sequence is that of Glycine cleavage system H protein from Prochlorococcus marinus (strain AS9601).